The following is a 196-amino-acid chain: Serine recombinase PinQ (196 aa).

The 141-residue stretch at 3–143 (QIFAYCRIST…SGIVRARGAG (141 aa)) folds into the Resolvase/invertase-type recombinase catalytic domain. Ser11 functions as the O-(5'-phospho-DNA)-serine intermediate in the catalytic mechanism.

Belongs to the site-specific recombinase resolvase family.

The sequence is that of Serine recombinase PinQ (pinQ) from Escherichia coli (strain K12).